The chain runs to 223 residues: Phosphoribosylformylglycinamidine synthase subunit PurQ (223 aa).

A Glutamine amidotransferase type-1 domain is found at 3-223; it reads SAVVQLPGLN…FASALDVIAA (221 aa). The active-site Nucleophile is the cysteine 86. Catalysis depends on residues histidine 196 and glutamate 198.

Part of the FGAM synthase complex composed of 1 PurL, 1 PurQ and 2 PurS subunits.

Its subcellular location is the cytoplasm. It catalyses the reaction N(2)-formyl-N(1)-(5-phospho-beta-D-ribosyl)glycinamide + L-glutamine + ATP + H2O = 2-formamido-N(1)-(5-O-phospho-beta-D-ribosyl)acetamidine + L-glutamate + ADP + phosphate + H(+). The enzyme catalyses L-glutamine + H2O = L-glutamate + NH4(+). It functions in the pathway purine metabolism; IMP biosynthesis via de novo pathway; 5-amino-1-(5-phospho-D-ribosyl)imidazole from N(2)-formyl-N(1)-(5-phospho-D-ribosyl)glycinamide: step 1/2. In terms of biological role, part of the phosphoribosylformylglycinamidine synthase complex involved in the purines biosynthetic pathway. Catalyzes the ATP-dependent conversion of formylglycinamide ribonucleotide (FGAR) and glutamine to yield formylglycinamidine ribonucleotide (FGAM) and glutamate. The FGAM synthase complex is composed of three subunits. PurQ produces an ammonia molecule by converting glutamine to glutamate. PurL transfers the ammonia molecule to FGAR to form FGAM in an ATP-dependent manner. PurS interacts with PurQ and PurL and is thought to assist in the transfer of the ammonia molecule from PurQ to PurL. In Rhizobium meliloti (strain 1021) (Ensifer meliloti), this protein is Phosphoribosylformylglycinamidine synthase subunit PurQ.